A 244-amino-acid polypeptide reads, in one-letter code: Eukaryotic translation initiation factor 6 (244 aa).

Belongs to the eIF-6 family. As to quaternary structure, monomer. Associates with the 60S ribosomal subunit.

It localises to the cytoplasm. The protein localises to the nucleus. It is found in the nucleolus. Its function is as follows. Binds to the 60S ribosomal subunit and prevents its association with the 40S ribosomal subunit to form the 80S initiation complex in the cytoplasm. May also be involved in ribosome biogenesis. This chain is Eukaryotic translation initiation factor 6 (eif6), found in Dictyostelium discoideum (Social amoeba).